The chain runs to 492 residues: Solute carrier family 2, facilitated glucose transporter member 1 (492 aa).

The residue at position 1 (Met1) is an N-acetylmethionine. Residues 1 to 11 (MEPSSKKVTGR) are Cytoplasmic-facing. The chain crosses the membrane as a helical span at residues 12–33 (LMLAVGGAVLGSLQFGYNTGVI). The Extracellular segment spans residues 34-66 (NAPQKVIEEFYNQTWIHRYGERILPTTLTTLWS). The N-linked (GlcNAc...) asparagine glycan is linked to Asn45. The chain crosses the membrane as a helical span at residues 67–87 (LSVAIFSVGGMIGSFSVGLFV). Topologically, residues 88-90 (NRF) are cytoplasmic. The chain crosses the membrane as a helical span at residues 91–112 (GRRNSMLMMNLLAFVSAVLMGF). The Extracellular segment spans residues 113–120 (SKLAKSFE). The chain crosses the membrane as a helical span at residues 121-144 (MLILGRFIIGVYCGLTTGFVPMYV). Over 145-155 (GEVSPTALRGA) the chain is Cytoplasmic. Residues 156-176 (LGTLHQLGIVVGILIAQVFGL) form a helical membrane-spanning segment. A D-glucose-binding site is contributed by Gln161. The Extracellular portion of the chain corresponds to 177-185 (DSIMGNEDL). Residues 186–206 (WPLLLSVIFVPALLQCIVLPL) form a helical membrane-spanning segment. The Cytoplasmic segment spans residues 207–271 (CPESPRFLLI…LFRSPAYRQP (65 aa)). At Ser226 the chain carries Phosphoserine. The helical transmembrane segment at 272 to 293 (ILSAVVLQLSQQLSGINAVFYY) threads the bilayer. Residues 282–283 (QQ) and Asn288 each bind D-glucose. Topologically, residues 294 to 306 (STSIFEKAGVQQP) are extracellular. A helical transmembrane segment spans residues 307–328 (VYATIGSGIVNTAFTVVSLFVV). Asn317 contacts D-glucose. Residues 329–334 (ERAGRR) are Cytoplasmic-facing. Residues 335–355 (TLHLIGLAGMAACAVLMTIAL) traverse the membrane as a helical segment. At 356-365 (ALLEQLPWMS) the chain is on the extracellular side. Residues 366 to 388 (YLSIVAIFGFVAFFEVGPGPIPW) form a helical membrane-spanning segment. D-glucose contacts are provided by Glu380 and Trp388. Over 389–401 (FIVAELFSQGPRP) the chain is Cytoplasmic. Residues 402–422 (AAVAVAGFSNWTSNFIVGMCF) form a helical membrane-spanning segment. Over 423–429 (QYVEQLC) the chain is Extracellular. A helical transmembrane segment spans residues 430-450 (GPYVFIIFTVLLVLFFIFTYF). The Cytoplasmic portion of the chain corresponds to 451 to 492 (KVPETKGRTFDEIASGFRQGGASQSDKTPEELFHPLGADSQV). At Ser465 the chain carries Phosphoserine. Positions 468-492 (RQGGASQSDKTPEELFHPLGADSQV) are disordered. Thr478 carries the post-translational modification Phosphothreonine. Ser490 is modified (phosphoserine).

It belongs to the major facilitator superfamily. Sugar transporter (TC 2.A.1.1) family. Glucose transporter subfamily. As to quaternary structure, found in a complex with ADD2, DMTN and SLC2A1. Interacts (via C-terminus cytoplasmic region) with DMTN. Interacts with SNX27; the interaction is required when endocytosed to prevent degradation in lysosomes and promote recycling to the plasma membrane. Interacts with GIPC (via PDZ domain). Interacts with STOM. Interacts with SGTA (via Gln-rich region). Interacts with BSG. Interacts with SMIM43; the interaction may promote SLC2A1-mediated glucose transport to meet the energy needs of mesendoderm differentiation. In terms of processing, phosphorylation at Ser-226 by PKC promotes glucose uptake by increasing cell membrane localization.

Its subcellular location is the cell membrane. The protein resides in the photoreceptor inner segment. The catalysed reaction is D-glucose(out) = D-glucose(in). With respect to regulation, the uptake of glucose is inhibited by cytochalasin B. Glucose uptake is increased in response to phorbol ester 12-O-tetradecanoylphorbol-13-acetate (TPA) treatment: TPA-induced glucose uptake requires phosphorylation at Ser-226. Its function is as follows. Facilitative glucose transporter, which is responsible for constitutive or basal glucose uptake. Has a very broad substrate specificity; can transport a wide range of aldoses including both pentoses and hexoses. Most important energy carrier of the brain: present at the blood-brain barrier and assures the energy-independent, facilitative transport of glucose into the brain. In association with BSG and NXNL1, promotes retinal cone survival by increasing glucose uptake into photoreceptors. Required for mesendoderm differentiation. The chain is Solute carrier family 2, facilitated glucose transporter member 1 from Oryctolagus cuniculus (Rabbit).